Here is a 473-residue protein sequence, read N- to C-terminus: Cardiolipin synthase C (473 aa).

PLD phosphodiesterase domains lie at Leu125–Tyr152 and Ser364–Ser391. Catalysis depends on residues His130, Lys132, Asp137, His369, Lys371, and Asp376.

The protein belongs to the phospholipase D family. Cardiolipin synthase subfamily. ClsC sub-subfamily.

It catalyses the reaction a 1,2-diacyl-sn-glycero-3-phospho-(1'-sn-glycerol) + a 1,2-diacyl-sn-glycero-3-phosphoethanolamine = a cardiolipin + ethanolamine. With respect to regulation, full activity requires coexpression with the neighboring gene ymdB. Catalyzes the synthesis of cardiolipin (CL) (diphosphatidylglycerol) from phosphatidylglycerol (PG) and phosphatidylethanolamine (PE). The protein is Cardiolipin synthase C of Escherichia coli (strain K12).